Here is a 287-residue protein sequence, read N- to C-terminus: ATP synthase gamma chain (287 aa).

The protein belongs to the ATPase gamma chain family. In terms of assembly, F-type ATPases have 2 components, CF(1) - the catalytic core - and CF(0) - the membrane proton channel. CF(1) has five subunits: alpha(3), beta(3), gamma(1), delta(1), epsilon(1). CF(0) has three main subunits: a, b and c.

Its subcellular location is the cell inner membrane. Produces ATP from ADP in the presence of a proton gradient across the membrane. The gamma chain is believed to be important in regulating ATPase activity and the flow of protons through the CF(0) complex. The sequence is that of ATP synthase gamma chain from Edwardsiella ictaluri (strain 93-146).